Here is a 382-residue protein sequence, read N- to C-terminus: MSVQGFWGLQLVPGKTYSQVVSAPFRITMASLAADAEAGKRTSVSVLVDEKEFVLCTLVPNKIEQQPLDITFVEGEEVTFSAKGQNNIHLTGNYVFQDDEDDEMGASMIDSDEEDNVEDFLKKLPPNASKEDINKALLGLEVDEEIESDEEVESDEEIESDEEIESEEEEEEPVPVSKKRPAEEVKEIASKKQKAEKKEQPKKEKSKKEEPKKEEPKKEQPKKEEPKKKEEPKKKEEPKKKEEPKKKEEPKKKEEPKKKEEPKKKEEPKKKITKLPNGLIIEDIKMGEGASCKNGQRVGMRYIGKLTNGKVFDKNVSGKPFSFLLGRGEVIKGWDLGIAGMKAGGERKLTIPAPLAYGKRGAPPDIPKNATLVFDVKLLSMK.

Residues 139–274 (GLEVDEEIES…KEEPKKKITK (136 aa)) are disordered. Residues 141-173 (EVDEEIESDEEVESDEEIESDEEIESEEEEEEP) show a composition bias toward acidic residues. 2 stretches are compositionally biased toward basic and acidic residues: residues 180-190 (RPAEEVKEIAS) and 196-270 (EKKE…EPKK). Positions 295-382 (GQRVGMRYIG…VFDVKLLSMK (88 aa)) constitute a PPIase FKBP-type domain.

This sequence belongs to the FKBP-type PPIase family. FKBP3/4 subfamily. As to quaternary structure, binds to histones H3 and H4.

Its subcellular location is the nucleus. The catalysed reaction is [protein]-peptidylproline (omega=180) = [protein]-peptidylproline (omega=0). Inhibited by both FK506 and rapamycin. In terms of biological role, PPIase that acts as a histone chaperone. Histone proline isomerase that increases the rate of cis-trans isomerization at prolines on the histone H3 N-terminal tail. Proline isomerization influences H3 methylation thereby regulating gene expression. In Rhizopus delemar (strain RA 99-880 / ATCC MYA-4621 / FGSC 9543 / NRRL 43880) (Mucormycosis agent), this protein is FK506-binding protein 4 (FKBP4).